A 151-amino-acid polypeptide reads, in one-letter code: Transcriptional regulator MraZ (151 aa).

2 SpoVT-AbrB domains span residues alanine 5–glutamate 52 and alanine 81–glutamate 124.

Belongs to the MraZ family. As to quaternary structure, forms oligomers.

Its subcellular location is the cytoplasm. It is found in the nucleoid. The sequence is that of Transcriptional regulator MraZ from Haemophilus influenzae (strain 86-028NP).